Here is a 762-residue protein sequence, read N- to C-terminus: MAIQTSNLGYPRIGLQREWKKTLEAFWSNKIDEEQFLTTMKEIRLQHVKVQQEKGIELIPIGDFTYYDHVLDTAYMLGFIPSRFSEFTSYLDVYFAMARGSKDHVASEMTKWFNTNYHYIVPEYEEGLQISLKDNRPLRLYEEAKQELGVDGKPVILGPYTFLKLAKGYTQEQFATILKQLVAPYVQLLSELHAAGAQVIQVDEPIFASLTKEEVQQAKEIYEAIRKEVPNANLLLQTYFDSVEENYEEIITFPVSGIGLDFVHGKEGNLHAISKYGFPADKTLAVGCIDGRNIWRADLDEVLTLFTTLQKQVQTKDFIVQPSCSLLHTPIDKTEETHLSTELFDALAFANQKLEELVLIHSALTKGTESISNELETYRNVHHTIRSSAVRNREDVKAARTALKEEDFSRPLPFEKRYELQQVALELPLLPTTTIGSFPQTTEVRQTRKEWRNGVISNEQYEKFIEKETEKWIRYQEEIGLDVLVHGEFERTDMVEYFGERLAGFSFTKNGWVQSYGSRCVKPPVIYGDVAFINGMTIKETVYAQSLTEKVVKGMLTGPVTILNWSFVRNDIPRKEVSYQIALALRHEIELLESSGIRVIQVDEPALREGMPLKEKDWDAYITWAVQSFLLATSSVANETQIHTHMCYSNFEDIVDAIRALDADVISIETSRSHGEFIDTLKHTTYEKGIGLGVYDIHSPRVPSKDEMYKIVEQSLEVCDPKYFWINPDCGLKTRRTEEVIPALEHMVQAAKDARSLLKTNA.

5-methyltetrahydropteroyltri-L-glutamate-binding positions include 17-20 (REWK) and Lys-111. L-homocysteine is bound by residues 435–437 (IGS) and Glu-488. Residues 435–437 (IGS) and Glu-488 each bind L-methionine. 5-methyltetrahydropteroyltri-L-glutamate is bound by residues 519-520 (RC) and Trp-565. Position 603 (Asp-603) interacts with L-homocysteine. Asp-603 contacts L-methionine. Glu-609 lines the 5-methyltetrahydropteroyltri-L-glutamate pocket. Zn(2+) is bound by residues His-645, Cys-647, and Glu-669. Catalysis depends on His-698, which acts as the Proton donor. Cys-730 lines the Zn(2+) pocket.

This sequence belongs to the vitamin-B12 independent methionine synthase family. The cofactor is Zn(2+).

It catalyses the reaction 5-methyltetrahydropteroyltri-L-glutamate + L-homocysteine = tetrahydropteroyltri-L-glutamate + L-methionine. It participates in amino-acid biosynthesis; L-methionine biosynthesis via de novo pathway; L-methionine from L-homocysteine (MetE route): step 1/1. Functionally, catalyzes the transfer of a methyl group from 5-methyltetrahydrofolate to homocysteine resulting in methionine formation. The sequence is that of 5-methyltetrahydropteroyltriglutamate--homocysteine methyltransferase from Bacillus cereus (strain G9842).